A 500-amino-acid chain; its full sequence is Glycerol kinase (500 aa).

An ADP-binding site is contributed by Thr-13. ATP-binding residues include Thr-13, Thr-14, and Ser-15. A sn-glycerol 3-phosphate-binding site is contributed by Thr-13. Arg-17 is a binding site for ADP. Sn-glycerol 3-phosphate contacts are provided by Arg-83, Glu-84, Tyr-135, and Asp-244. Glycerol-binding residues include Arg-83, Glu-84, Tyr-135, Asp-244, and Gln-245. Residues Thr-266 and Gly-309 each contribute to the ADP site. Thr-266, Gly-309, Gln-313, and Gly-410 together coordinate ATP. ADP-binding residues include Gly-410 and Asn-414.

Belongs to the FGGY kinase family.

It carries out the reaction glycerol + ATP = sn-glycerol 3-phosphate + ADP + H(+). Its pathway is polyol metabolism; glycerol degradation via glycerol kinase pathway; sn-glycerol 3-phosphate from glycerol: step 1/1. Inhibited by fructose 1,6-bisphosphate (FBP). Its function is as follows. Key enzyme in the regulation of glycerol uptake and metabolism. Catalyzes the phosphorylation of glycerol to yield sn-glycerol 3-phosphate. This chain is Glycerol kinase, found in Burkholderia ambifaria (strain MC40-6).